A 488-amino-acid polypeptide reads, in one-letter code: Inosine-5'-monophosphate dehydrogenase (488 aa).

CBS domains are found at residues 93 to 149 (VVTD…NQPV) and 153 to 214 (MTPK…CKDE). Residues D248 and 248–250 (DSS) each bind NAD(+). K267 is subject to N6-acetyllysine. 298–300 (GIG) lines the NAD(+) pocket. K(+)-binding residues include G300 and G302. S303 serves as a coordination point for IMP. C305 contacts K(+). The active-site Thioimidate intermediate is the C305. Residues 338 to 340 (DGG), 361 to 362 (GS), and 385 to 389 (YRGMG) contribute to the IMP site. R401 serves as the catalytic Proton acceptor. E415 contributes to the IMP binding site. At K428 the chain carries N6-acetyllysine. E469, S470, and H471 together coordinate K(+).

This sequence belongs to the IMPDH/GMPR family. In terms of assembly, homotetramer. K(+) is required as a cofactor.

It catalyses the reaction IMP + NAD(+) + H2O = XMP + NADH + H(+). The protein operates within purine metabolism; XMP biosynthesis via de novo pathway; XMP from IMP: step 1/1. With respect to regulation, mycophenolic acid (MPA) is a non-competitive inhibitor that prevents formation of the closed enzyme conformation by binding to the same site as the amobile flap. In contrast, mizoribine monophosphate (MZP) is a competitive inhibitor that induces the closed conformation. MPA is a potent inhibitor of mammalian IMPDHs but a poor inhibitor of the bacterial enzymes. MZP is a more potent inhibitor of bacterial IMPDH. In terms of biological role, catalyzes the conversion of inosine 5'-phosphate (IMP) to xanthosine 5'-phosphate (XMP), the first committed and rate-limiting step in the de novo synthesis of guanine nucleotides, and therefore plays an important role in the regulation of cell growth. This Escherichia coli O157:H7 protein is Inosine-5'-monophosphate dehydrogenase.